We begin with the raw amino-acid sequence, 200 residues long: ATP-dependent Clp protease proteolytic subunit (200 aa).

Ser-103 (nucleophile) is an active-site residue. Residue His-128 is part of the active site.

This sequence belongs to the peptidase S14 family. In terms of assembly, fourteen ClpP subunits assemble into 2 heptameric rings which stack back to back to give a disk-like structure with a central cavity, resembling the structure of eukaryotic proteasomes.

The protein resides in the cytoplasm. It catalyses the reaction Hydrolysis of proteins to small peptides in the presence of ATP and magnesium. alpha-casein is the usual test substrate. In the absence of ATP, only oligopeptides shorter than five residues are hydrolyzed (such as succinyl-Leu-Tyr-|-NHMec, and Leu-Tyr-Leu-|-Tyr-Trp, in which cleavage of the -Tyr-|-Leu- and -Tyr-|-Trp bonds also occurs).. Its function is as follows. Cleaves peptides in various proteins in a process that requires ATP hydrolysis. Has a chymotrypsin-like activity. Plays a major role in the degradation of misfolded proteins. In Vibrio cholerae serotype O1 (strain ATCC 39541 / Classical Ogawa 395 / O395), this protein is ATP-dependent Clp protease proteolytic subunit.